The primary structure comprises 1813 residues: Latent-transforming growth factor beta-binding protein 2 (1813 aa).

The signal sequence occupies residues 1–35 (MRAPTTARCSGCIQRVRWRGFLPLVLAVLMGTSHA). The tract at residues 94 to 115 (NPGWLAEAEARRPPRTQQLRRV) is heparin-binding. The interval 103 to 152 (ARRPPRTQQLRRVQPPVQTRRSHPRGQQQIAARAAPSVARLETPQRPAAA) is disordered. Polar residues predominate over residues 108 to 132 (RTQQLRRVQPPVQTRRSHPRGQQQI). An N-linked (GlcNAc...) asparagine glycan is attached at Asn-175. Positions 181–213 (IKPVCQPPCQNRGSCSRPQVCICRSGFRGARCE) constitute an EGF-like 1 domain. 3 disulfides stabilise this stretch: Cys-185-Cys-195, Cys-189-Cys-201, and Cys-203-Cys-212. Positions 220 to 305 (EFDPQNARPV…QLMSNALPSG (86 aa)) are disordered. The heparin-binding stretch occupies residues 226-243 (ARPVPRRSVERAPGPHRS). Residues 257-266 (LVPPPSPPPS) show a composition bias toward pro residues. Residues 293 to 302 (ANGQLMSNAL) show a composition bias toward polar residues. Asn-328 carries N-linked (GlcNAc...) asparagine glycosylation. Position 329 to 339 (329 to 339 (LTEKIKKIKVV)) interacts with heparin. An EGF-like 2 domain is found at 381 to 413 (RIYFCQIPCLNGGRCIGRDECWCPANSTGKFCH). Intrachain disulfides connect Cys-385/Cys-395, Cys-389/Cys-401, and Cys-403/Cys-412. Asn-406 carries an N-linked (GlcNAc...) asparagine glycan. Ser-491 carries the phosphoserine modification. The tract at residues 492–524 (VETRASHRPHGNLGHSPWASNSIPARAGEAPRP) is disordered. Residues 536–588 (GQCYLSTVNGQCANPLGSLTSQEDCCGSVGTFWGVTSCAPCPPRQEGPAFPVI) enclose the TB 1 domain. Intrachain disulfides connect Cys-538-Cys-560, Cys-547-Cys-573, and Cys-561-Cys-576. An N-linked (GlcNAc...) asparagine glycan is attached at Asn-603. One can recognise an EGF-like 3; calcium-binding domain in the interval 609 to 649 (DINECLTLGLCKDSECVNTRGSYLCTCRPGLMLDPSRSRCV). Cystine bridges form between Cys-613/Cys-624, Cys-619/Cys-633, Cys-635/Cys-648, Cys-661/Cys-683, Cys-670/Cys-696, Cys-684/Cys-699, and Cys-685/Cys-711. The 53-residue stretch at 659–711 (GLCYRSLGSGTCTLPLVHRITKQICCCSRVGKAWGSTCEQCPLPGTEAFREIC) folds into the TB 2 domain. Disordered regions lie at residues 730–761 (KAEE…QPLR) and 787–819 (SAPH…PAEE). The region spanning 835–877 (DFDPCFAGASNICGPGTCVSLPNGYRCVCSPGYQLHPSQDYCT) is the EGF-like 4 domain. 49 disulfides stabilise this stretch: Cys-839/Cys-852, Cys-847/Cys-861, Cys-863/Cys-876, Cys-882/Cys-893, Cys-887/Cys-902, Cys-904/Cys-919, Cys-925/Cys-936, Cys-931/Cys-945, Cys-947/Cys-959, Cys-965/Cys-976, Cys-971/Cys-985, Cys-988/Cys-999, Cys-1005/Cys-1016, Cys-1011/Cys-1025, Cys-1027/Cys-1040, Cys-1046/Cys-1057, Cys-1052/Cys-1066, Cys-1069/Cys-1082, Cys-1088/Cys-1099, Cys-1094/Cys-1108, Cys-1111/Cys-1124, Cys-1130/Cys-1142, Cys-1137/Cys-1151, Cys-1153/Cys-1165, Cys-1171/Cys-1183, Cys-1177/Cys-1192, Cys-1194/Cys-1207, Cys-1213/Cys-1224, Cys-1219/Cys-1233, Cys-1235/Cys-1249, Cys-1255/Cys-1268, Cys-1263/Cys-1277, Cys-1281/Cys-1293, Cys-1299/Cys-1311, Cys-1305/Cys-1320, Cys-1322/Cys-1335, Cys-1341/Cys-1353, Cys-1348/Cys-1362, Cys-1364/Cys-1378, Cys-1405/Cys-1428, Cys-1415/Cys-1440, Cys-1429/Cys-1443, Cys-1430/Cys-1455, Cys-1481/Cys-1494, Cys-1489/Cys-1503, Cys-1505/Cys-1518, Cys-1524/Cys-1534, Cys-1529/Cys-1543, and Cys-1545/Cys-1558. The 43-residue stretch at 878–920 (DDNECMRNPCEGRGRCVNSVGSYSCLCYPGYTLVTLGDTQECQ) folds into the EGF-like 5; calcium-binding domain. The 40-residue stretch at 921–960 (DIDECEQPGVCSGGRCSNTEGSYHCECDRGYIMVRKGHCQ) folds into the EGF-like 6; calcium-binding domain. The EGF-like 7; calcium-binding domain occupies 961–1000 (DINECRHPGTCPDGRCVNSPGSYTCLACEEGYVGQSGSCV). The EGF-like 8; calcium-binding domain occupies 1001–1041 (DVNECLTPGICTHGRCINMEGSFRCSCEPGYEVTPDKKGCR). The region spanning 1042–1083 (DVDECASRASCPTGLCLNTEGSFTCSACQSGYWVNEDGTACE) is the EGF-like 9; calcium-binding domain. Positions 1084-1125 (DLDECAFPGVCPTGVCTNTVGSFSCKDCDQGYRPNPLGNRCE) constitute an EGF-like 10; calcium-binding domain. The region spanning 1126–1166 (DVDECEGPQSSCRGGECKNTEGSYQCLCHQGFQLVNGTMCE) is the EGF-like 11; calcium-binding domain. Asn-1161 carries N-linked (GlcNAc...) asparagine glycosylation. Residues 1167–1208 (DVNECVGEEHCAPHGECLNSLGSFFCLCAPGFASAEGGTRCQ) form the EGF-like 12; calcium-binding domain. In terms of domain architecture, EGF-like 13; calcium-binding spans 1209–1250 (DVDECAATDPCPGGHCVNTEGSFSCLCETASFQPSPDSGECL). Positions 1251-1294 (DIDECEDREDPVCGAWRCENSPGSYRCILDCQPGFYVAPNGDCI) constitute an EGF-like 14; calcium-binding domain. Residues 1295-1336 (DIDECANDTVCGNHGFCDNTDGSFRCLCDQGFETSPSGWECV) enclose the EGF-like 15; calcium-binding domain. Residue Asn-1301 is glycosylated (N-linked (GlcNAc...) asparagine). Positions 1337–1379 (DVNECELMMAVCGDALCENVEGSFLCLCASDLEEYDAEEGHCR) constitute an EGF-like 16; calcium-binding domain. The 53-residue stretch at 1403-1455 (MECYSEHNGGPPCSQILGQNSTQAECCCTQGARWGKACAPCPSEDSVEFSQLC) folds into the TB 3 domain. The N-linked (GlcNAc...) asparagine glycan is linked to Asn-1422. The EGF-like 17; calcium-binding domain maps to 1477–1519 (DADECVLFGPALCQNGRCSNIVPGYICLCNPGYHYDASSRKCQ). The region spanning 1520–1559 (DHNECQDLACENGECVNQEGSFHCLCNPPLTLDLSGQRCV) is the EGF-like 18; calcium-binding domain. Residue Asn-1560 is glycosylated (N-linked (GlcNAc...) asparagine). The TB 4 domain maps to 1576–1628 (DICWKKVTNDVCSQPLRGHHTTYTECCCQDGEAWSQQCALCPPRSSEVYAQLC). Cystine bridges form between Cys-1578-Cys-1601, Cys-1587-Cys-1613, Cys-1602-Cys-1616, and Cys-1603-Cys-1628. A C-terminal domain region spans residues 1631-1813 (ARIEAERGAG…PGPPHCAAKE (183 aa)). The tract at residues 1671–1717 (YLGPEDTAPEPPFSNPASQPGDNTPVLEPPLQPSELQPHYLASHSEP) is disordered. In terms of domain architecture, EGF-like 19; calcium-binding spans 1725 to 1765 (QAEECGILNGCENGRCVRVREGYTCDCFEGFQLDAPTLACV). Disulfide bonds link Cys-1729–Cys-1740, Cys-1735–Cys-1749, Cys-1751–Cys-1764, Cys-1770–Cys-1785, Cys-1780–Cys-1794, and Cys-1796–Cys-1809. The EGF-like 20; calcium-binding domain occupies 1766 to 1810 (DVNECEDLNGPARLCAHGHCENTEGSYRCHCSPGYVAEPGPPHCA).

The protein belongs to the LTBP family. Forms part of the large latent transforming growth factor beta precursor complex; removal is essential for activation of complex. Interacts with SDC4. Interacts (via C-terminal domain) with FBN1 (via N-terminal domain) in a Ca(+2)-dependent manner. Post-translationally, N-Glycosylated. Contains hydroxylated asparagine residues. As to expression, expressed in the anterior chamber of the eye.

It is found in the secreted. It localises to the extracellular space. Its subcellular location is the extracellular matrix. Its function is as follows. May play an integral structural role in elastic-fiber architectural organization and/or assembly. This chain is Latent-transforming growth factor beta-binding protein 2 (Ltbp2), found in Mus musculus (Mouse).